The following is a 327-amino-acid chain: Glycerol-3-phosphate dehydrogenase [NAD(P)+] (327 aa).

Residues Phe13, Arg34, and Lys107 each coordinate NADPH. Lys107 and Gly135 together coordinate sn-glycerol 3-phosphate. Ala139 provides a ligand contact to NADPH. 5 residues coordinate sn-glycerol 3-phosphate: Lys190, Asp243, Ser253, Arg254, and Asn255. Residue Lys190 is the Proton acceptor of the active site. Residue Arg254 participates in NADPH binding. Residues Val276 and Glu277 each coordinate NADPH.

Belongs to the NAD-dependent glycerol-3-phosphate dehydrogenase family.

It localises to the cytoplasm. It catalyses the reaction sn-glycerol 3-phosphate + NAD(+) = dihydroxyacetone phosphate + NADH + H(+). The catalysed reaction is sn-glycerol 3-phosphate + NADP(+) = dihydroxyacetone phosphate + NADPH + H(+). Its pathway is membrane lipid metabolism; glycerophospholipid metabolism. Functionally, catalyzes the reduction of the glycolytic intermediate dihydroxyacetone phosphate (DHAP) to sn-glycerol 3-phosphate (G3P), the key precursor for phospholipid synthesis. The sequence is that of Glycerol-3-phosphate dehydrogenase [NAD(P)+] from Rhizobium etli (strain ATCC 51251 / DSM 11541 / JCM 21823 / NBRC 15573 / CFN 42).